The primary structure comprises 377 residues: Glutamate 5-kinase (377 aa).

Lys-17 serves as a coordination point for ATP. Residues Ser-56, Asp-143, and Asn-155 each contribute to the substrate site. 217–223 (SGGMFSK) is an ATP binding site. A PUA domain is found at 282–360 (AGDLVIDDGA…CEIESILGKC (79 aa)).

This sequence belongs to the glutamate 5-kinase family.

It is found in the cytoplasm. The catalysed reaction is L-glutamate + ATP = L-glutamyl 5-phosphate + ADP. It participates in amino-acid biosynthesis; L-proline biosynthesis; L-glutamate 5-semialdehyde from L-glutamate: step 1/2. Functionally, catalyzes the transfer of a phosphate group to glutamate to form L-glutamate 5-phosphate. The sequence is that of Glutamate 5-kinase from Maridesulfovibrio salexigens (strain ATCC 14822 / DSM 2638 / NCIMB 8403 / VKM B-1763) (Desulfovibrio salexigens).